We begin with the raw amino-acid sequence, 372 residues long: Alanine dehydrogenase 2 (372 aa).

His-95 is a catalytic residue. NAD(+) is bound at residue 169–199; it reads KVTIIGGGQAGTNAAKIALGLGADVTILDVN.

It belongs to the AlaDH/PNT family.

The enzyme catalyses L-alanine + NAD(+) + H2O = pyruvate + NH4(+) + NADH + H(+). It participates in amino-acid degradation; L-alanine degradation via dehydrogenase pathway; NH(3) and pyruvate from L-alanine: step 1/1. May play a role in cell wall synthesis as L-alanine is an important constituent of the peptidoglycan layer. The chain is Alanine dehydrogenase 2 (ald2) from Staphylococcus aureus (strain N315).